Reading from the N-terminus, the 258-residue chain is 5'-nucleotidase SurE (258 aa).

The a divalent metal cation site is built by D8, D9, S39, and N95.

It belongs to the SurE nucleotidase family. Requires a divalent metal cation as cofactor.

Its subcellular location is the cytoplasm. The catalysed reaction is a ribonucleoside 5'-phosphate + H2O = a ribonucleoside + phosphate. Its function is as follows. Nucleotidase that shows phosphatase activity on nucleoside 5'-monophosphates. The protein is 5'-nucleotidase SurE of Methanobrevibacter smithii (strain ATCC 35061 / DSM 861 / OCM 144 / PS).